Reading from the N-terminus, the 1486-residue chain is Chromosome partition protein MukB (1486 aa).

34 to 41 lines the ATP pocket; sequence GGNGAGKS. 3 coiled-coil regions span residues 326–418, 444–480, and 509–603; these read LEAD…QYNQ, LETFQAKELEATEKMLSLEQKMSMAQTAHSQFEQAYQ, and RHLA…RAPV. A flexible hinge region spans residues 666 to 783; sequence PGGSEDQRLN…EVPLFGRAAR (118 aa). 3 coiled-coil regions span residues 835 to 923, 977 to 1115, and 1209 to 1266; these read EAEI…AKLE, EMLS…TAKA, and VEAI…QNVS.

The protein belongs to the SMC family. MukB subfamily. As to quaternary structure, homodimerization via its hinge domain. Binds to DNA via its C-terminal region. Interacts, and probably forms a ternary complex, with MukE and MukF via its C-terminal region. The complex formation is stimulated by calcium or magnesium. Interacts with tubulin-related protein FtsZ.

It localises to the cytoplasm. The protein localises to the nucleoid. Plays a central role in chromosome condensation, segregation and cell cycle progression. Functions as a homodimer, which is essential for chromosome partition. Involved in negative DNA supercoiling in vivo, and by this means organize and compact chromosomes. May achieve or facilitate chromosome segregation by condensation DNA from both sides of a centrally located replisome during cell division. This chain is Chromosome partition protein MukB, found in Escherichia coli (strain 55989 / EAEC).